The primary structure comprises 486 residues: Glutamate--tRNA ligase (486 aa).

The 'HIGH' region motif lies at 11–21 (PSPTGLLHIGN). The 'KMSKS' region signature appears at 255 to 259 (KLSKR). Lysine 258 contacts ATP.

It belongs to the class-I aminoacyl-tRNA synthetase family. Glutamate--tRNA ligase type 1 subfamily. As to quaternary structure, monomer.

It is found in the cytoplasm. The enzyme catalyses tRNA(Glu) + L-glutamate + ATP = L-glutamyl-tRNA(Glu) + AMP + diphosphate. In terms of biological role, catalyzes the attachment of glutamate to tRNA(Glu) in a two-step reaction: glutamate is first activated by ATP to form Glu-AMP and then transferred to the acceptor end of tRNA(Glu). The sequence is that of Glutamate--tRNA ligase from Streptococcus pneumoniae (strain ATCC BAA-255 / R6).